The sequence spans 369 residues: Cobalt-precorrin-5B C(1)-methyltransferase (369 aa).

The protein belongs to the CbiD family.

It carries out the reaction Co-precorrin-5B + S-adenosyl-L-methionine = Co-precorrin-6A + S-adenosyl-L-homocysteine. The protein operates within cofactor biosynthesis; adenosylcobalamin biosynthesis; cob(II)yrinate a,c-diamide from sirohydrochlorin (anaerobic route): step 6/10. Functionally, catalyzes the methylation of C-1 in cobalt-precorrin-5B to form cobalt-precorrin-6A. In Brucella melitensis biotype 1 (strain ATCC 23456 / CCUG 17765 / NCTC 10094 / 16M), this protein is Cobalt-precorrin-5B C(1)-methyltransferase.